Consider the following 82-residue polypeptide: Small ribosomal subunit protein bS18 (82 aa).

It belongs to the bacterial ribosomal protein bS18 family. In terms of assembly, part of the 30S ribosomal subunit. Forms a tight heterodimer with protein bS6.

Its function is as follows. Binds as a heterodimer with protein bS6 to the central domain of the 16S rRNA, where it helps stabilize the platform of the 30S subunit. The chain is Small ribosomal subunit protein bS18 from Bartonella bacilliformis (strain ATCC 35685 / KC583 / Herrer 020/F12,63).